The chain runs to 65 residues: MKQLNSEQLQNIIGGNRWTNAYSAALGCAVPGVKYGKKLGGVWGAVIGGVGGAAVCGLAGYVRKG.

A propeptide spanning residues 1 to 15 is cleaved from the precursor; that stretch reads MKQLNSEQLQNIIGG. The chain crosses the membrane as a helical span at residues 39-59; it reads LGGVWGAVIGGVGGAAVCGLA.

Active lactobin is composed of two different peptides, one which is lactobin A.

It localises to the secreted. The protein localises to the host cell membrane. Its function is as follows. This heat stable bacteriocin inhibits the growth of closely related Lactobacillus species. It may act as a pore-forming protein, creating a channel in the cell membrane. It kills Lactobacillus helveticus ATCC 15009, but displays no activity towards Listeria species. This chain is Bacteriocin amylovorin-L (amyL), found in Lactobacillus amylovorus.